A 311-amino-acid polypeptide reads, in one-letter code: Delta(1)-pyrroline-2-carboxylate reductase 2 (311 aa).

It belongs to the ornithine cyclodeaminase/mu-crystallin family.

The catalysed reaction is L-proline + NAD(+) = 1-pyrroline-2-carboxylate + NADH + H(+). The enzyme catalyses L-proline + NADP(+) = 1-pyrroline-2-carboxylate + NADPH + H(+). In terms of biological role, catalyzes the reduction of Delta(1)-pyrroline-2-carboxylate (Pyr2C) to L-proline, using preferentially NADPH over NADH as the electron donor. May be involved in a degradation pathway that converts trans-3-hydroxy-L-proline (t3LHyp) to L-proline. This chain is Delta(1)-pyrroline-2-carboxylate reductase 2, found in Burkholderia ambifaria (strain ATCC BAA-244 / DSM 16087 / CCUG 44356 / LMG 19182 / AMMD) (Burkholderia cepacia (strain AMMD)).